A 404-amino-acid chain; its full sequence is Acetate kinase (404 aa).

Mg(2+) is bound at residue Asn-7. Lys-14 lines the ATP pocket. Position 95 (Arg-95) interacts with substrate. The Proton donor/acceptor role is filled by Asp-152. ATP contacts are provided by residues 212–216, 286–288, and 334–338; these read HLGNG, DMR, and GIGEN. A Mg(2+)-binding site is contributed by Glu-388.

This sequence belongs to the acetokinase family. In terms of assembly, homodimer. The cofactor is Mg(2+). Requires Mn(2+) as cofactor.

It localises to the cytoplasm. The catalysed reaction is acetate + ATP = acetyl phosphate + ADP. It participates in metabolic intermediate biosynthesis; acetyl-CoA biosynthesis; acetyl-CoA from acetate: step 1/2. In terms of biological role, catalyzes the formation of acetyl phosphate from acetate and ATP. Can also catalyze the reverse reaction. This is Acetate kinase from Nitratidesulfovibrio vulgaris (strain DSM 19637 / Miyazaki F) (Desulfovibrio vulgaris).